The primary structure comprises 291 residues: UPF0276 protein VV1_0952 (291 aa).

Belongs to the UPF0276 family.

The polypeptide is UPF0276 protein VV1_0952 (Vibrio vulnificus (strain CMCP6)).